Consider the following 308-residue polypeptide: Heme A synthase (308 aa).

Topologically, residues 1–8 (MFKKRNLK) are cytoplasmic. The helical transmembrane segment at 9 to 29 (WLSILATVIMAWVQLGGALVT) threads the bilayer. At 30–67 (KTGSENGCGASWPLCHGALLPQNLPIATIIELSHRATS) the chain is on the extracellular side. Cysteines 37 and 44 form a disulfide. Residue glutamate 60 is part of the active site. Histidine 63 lines the heme o pocket. The chain crosses the membrane as a helical span at residues 68 to 88 (ALSLIVVLWLVITAWKNIGYI). Over 89–93 (KEVKP) the chain is Cytoplasmic. Residues 94–114 (LCIISVAFLLIQALVGAAAVL) form a helical membrane-spanning segment. Residues 115-123 (WQQNDYVLA) are Extracellular-facing. A helical membrane pass occupies residues 124–144 (LHFGISLISFSSVFVLTLIIF). Histidine 125 contacts heme o. Topologically, residues 145-161 (DVDQKYEANKVHIDRKL) are cytoplasmic. Residues 162–182 (RIYTWTMAICLYVGIYTGALV) traverse the membrane as a helical segment. The Extracellular segment spans residues 183-215 (RHTKSSLAYGSWPLPFNDLIPHTEQDWVQLAHR). Histidine 214 is a heme b binding site. A helical membrane pass occupies residues 216–236 (TLALIASISVFLAFNYAIKHY). Residues 237–244 (QNNRTIRY) are Cytoplasmic-facing. A helical transmembrane segment spans residues 245–265 (GYTAALLLIILQIVTGALSIF). The Extracellular portion of the chain corresponds to 266-270 (THVNL). The helical transmembrane segment at 271–291 (IIALLHALIITFEFGLIAYLI) threads the bilayer. A heme b-binding site is contributed by histidine 276. Over 292 to 308 (VLLLRSQRVEKVKQNAY) the chain is Cytoplasmic.

It belongs to the COX15/CtaA family. Type 1 subfamily. In terms of assembly, interacts with CtaB. Requires heme b as cofactor.

The protein localises to the cell membrane. It carries out the reaction Fe(II)-heme o + 2 A + H2O = Fe(II)-heme a + 2 AH2. The protein operates within porphyrin-containing compound metabolism; heme A biosynthesis; heme A from heme O: step 1/1. Functionally, catalyzes the conversion of heme O to heme A by two successive hydroxylations of the methyl group at C8. The first hydroxylation forms heme I, the second hydroxylation results in an unstable dihydroxymethyl group, which spontaneously dehydrates, resulting in the formyl group of heme A. The protein is Heme A synthase of Staphylococcus carnosus (strain TM300).